The chain runs to 277 residues: Large ribosomal subunit protein uL2 (277 aa).

2 disordered regions span residues 36–55 (PLPK…RHHG) and 213–277 (WKGI…RKKK).

Belongs to the universal ribosomal protein uL2 family. Part of the 50S ribosomal subunit. Forms a bridge to the 30S subunit in the 70S ribosome.

One of the primary rRNA binding proteins. Required for association of the 30S and 50S subunits to form the 70S ribosome, for tRNA binding and peptide bond formation. It has been suggested to have peptidyltransferase activity; this is somewhat controversial. Makes several contacts with the 16S rRNA in the 70S ribosome. The sequence is that of Large ribosomal subunit protein uL2 from Staphylococcus aureus (strain bovine RF122 / ET3-1).